The chain runs to 101 residues: MDPQSAVYSLPRVPTAAPPNAGVPWSHVGEVAVLSFVALICIYLLYLWVLRDLILVLKARRGRSTEELIFGSEAVDRRSPIPNTLEPTAPVHPGPFVPGSG.

A helical transmembrane segment spans residues 30-50; it reads EVAVLSFVALICIYLLYLWVL. A disordered region spans residues 78-101; sequence RSPIPNTLEPTAPVHPGPFVPGSG. Residues 90 to 101 show a composition bias toward pro residues; that stretch reads PVHPGPFVPGSG.

It belongs to the mastrevirus movement protein family. As to quaternary structure, interacts with the capsid protein (CP). Part of a MP-CP-viral DNA complex.

Its subcellular location is the host membrane. Functionally, involved in the viral transport within, and between cells. The chain is Movement protein from Maize streak virus genotype E (isolate Pat) (MSV).